Consider the following 365-residue polypeptide: Chorismate synthase (365 aa).

Basic and acidic residues predominate over residues 41-51; that stretch reads IQKELDRRRPG. The segment at 41–62 is disordered; sequence IQKELDRRRPGQSEVSTPRSEA. Arginine 48 is a binding site for NADP(+). FMN-binding positions include 125-127, glycine 285, 300-304, and arginine 327; these read RSS and KPTPS.

The protein belongs to the chorismate synthase family. It depends on FMNH2 as a cofactor.

It carries out the reaction 5-O-(1-carboxyvinyl)-3-phosphoshikimate = chorismate + phosphate. Its pathway is metabolic intermediate biosynthesis; chorismate biosynthesis; chorismate from D-erythrose 4-phosphate and phosphoenolpyruvate: step 7/7. In terms of biological role, catalyzes the anti-1,4-elimination of the C-3 phosphate and the C-6 proR hydrogen from 5-enolpyruvylshikimate-3-phosphate (EPSP) to yield chorismate, which is the branch point compound that serves as the starting substrate for the three terminal pathways of aromatic amino acid biosynthesis. This reaction introduces a second double bond into the aromatic ring system. This Methanosarcina acetivorans (strain ATCC 35395 / DSM 2834 / JCM 12185 / C2A) protein is Chorismate synthase.